Reading from the N-terminus, the 184-residue chain is Elongation factor P (184 aa).

Belongs to the elongation factor P family.

The protein localises to the cytoplasm. Its pathway is protein biosynthesis; polypeptide chain elongation. Involved in peptide bond synthesis. Stimulates efficient translation and peptide-bond synthesis on native or reconstituted 70S ribosomes in vitro. Probably functions indirectly by altering the affinity of the ribosome for aminoacyl-tRNA, thus increasing their reactivity as acceptors for peptidyl transferase. This is Elongation factor P from Mycoplasma mycoides subsp. mycoides SC (strain CCUG 32753 / NCTC 10114 / PG1).